The following is a 197-amino-acid chain: Probable deoxycytidylate deaminase (197 aa).

Residues 49–183 enclose the CMP/dCMP-type deaminase domain; that stretch reads KKHQRFLRIA…KMLDHARLPY (135 aa). H117 provides a ligand contact to Zn(2+). Catalysis depends on E119, which acts as the Proton donor. 2 residues coordinate Zn(2+): C143 and C146.

It belongs to the cytidine and deoxycytidylate deaminase family. Zn(2+) is required as a cofactor.

It carries out the reaction dCMP + H2O + H(+) = dUMP + NH4(+). Functionally, supplies the nucleotide substrate for thymidylate synthetase. The sequence is that of Probable deoxycytidylate deaminase from Caenorhabditis elegans.